The primary structure comprises 76 residues: Small ribosomal subunit protein bS18 (76 aa).

Belongs to the bacterial ribosomal protein bS18 family. As to quaternary structure, part of the 30S ribosomal subunit. Forms a tight heterodimer with protein bS6.

In terms of biological role, binds as a heterodimer with protein bS6 to the central domain of the 16S rRNA, where it helps stabilize the platform of the 30S subunit. The sequence is that of Small ribosomal subunit protein bS18 from Xylella fastidiosa (strain M23).